A 331-amino-acid polypeptide reads, in one-letter code: Putative lipoprotein YerB (331 aa).

Residues 1 to 19 (MKKWMTVCALCFVFFLLVS) form the signal peptide. Cys20 is lipidated: N-palmitoyl cysteine. Cys20 carries S-diacylglycerol cysteine lipidation. Thr97 bears the Phosphothreonine mark. Ser103 carries the phosphoserine modification.

As to quaternary structure, interacts with PcrA. The interaction is not essential for cell viability or repair of UV-induced lesions.

The protein resides in the cell membrane. The sequence is that of Putative lipoprotein YerB (yerB) from Bacillus subtilis (strain 168).